A 291-amino-acid chain; its full sequence is tRNA dimethylallyltransferase (291 aa).

Residue 9–16 (GPTASGKT) coordinates ATP. 11 to 16 (TASGKT) is a substrate binding site. Positions 34 to 37 (DSLQ) are interaction with substrate tRNA.

The protein belongs to the IPP transferase family. In terms of assembly, monomer. The cofactor is Mg(2+).

It catalyses the reaction adenosine(37) in tRNA + dimethylallyl diphosphate = N(6)-dimethylallyladenosine(37) in tRNA + diphosphate. Its function is as follows. Catalyzes the transfer of a dimethylallyl group onto the adenine at position 37 in tRNAs that read codons beginning with uridine, leading to the formation of N6-(dimethylallyl)adenosine (i(6)A). This is tRNA dimethylallyltransferase from Onion yellows phytoplasma (strain OY-M).